A 304-amino-acid chain; its full sequence is GTP cyclohydrolase FolE2 (304 aa).

The protein belongs to the GTP cyclohydrolase IV family.

The enzyme catalyses GTP + H2O = 7,8-dihydroneopterin 3'-triphosphate + formate + H(+). The protein operates within cofactor biosynthesis; 7,8-dihydroneopterin triphosphate biosynthesis; 7,8-dihydroneopterin triphosphate from GTP: step 1/1. Its function is as follows. Converts GTP to 7,8-dihydroneopterin triphosphate. The sequence is that of GTP cyclohydrolase FolE2 from Chromohalobacter salexigens (strain ATCC BAA-138 / DSM 3043 / CIP 106854 / NCIMB 13768 / 1H11).